The primary structure comprises 814 residues: MATRYDSSITEPKWRERWERDGIYRFEPDSDKPKHYAVTMLPYPSGNLHIGHWYAMSPSDVHARYMRMRGYNVFFPMGFDAFGLPAENAAIKNNLDPRKWTYSNIEYMRGQLQSMGMMVDWDQQIVSADPEYYRWNQWFFIQFFKRGLAYKKFSAVDWCPKCNTTLAREQVVGDERRCERCDSLVTKRDLDQWYFKITSYADELLNFSELDWPERITTMQRNWIGRSEGAEISFKSEAGDPITVFSTRPDTLWGATFMVLAPEHPLVAKLTSAEQKASVDAYVAEAIRKTEVERQSTDDEKPKTGVWIGAYAINPASQERVPIWIADYVLMTYGTGAIMAVPGHDERDFAFAKTFGLAIKRVVTQSEQTAETPLEAAEPAYGTVVNSGQIDGLSSAEAKEAVINWLEAEQLGKRAINYRLRDWLVSRQRYWGTPIPMIYCPTCGTVPVPEDQLPLLLPDSVDFKPTGESPLKLHPTWRFTTCPTCGGEAERDTDTMDTFVDSSWYQVRYLSPHETNAPFTKAIADKWLPVDQYTGGREHAVMHLLYTRFWWKAMRDMGLVSANEPMTRLINQGVILGEDSNKMSKSRGNVIDPDMLVAQYGADTVRTFLMFIGPWEQGGPWNNRGIEGCVRFLDRAWRVVTDTPQRHDAVGDASTLERQTHRIIKKVGDDLQRFAFNTAIAGLMEFVNELMKVRETDVYGTTTWRKATETLTLLLAPIAPHIAEELWEFLGNSQSVHLQAWPSYDETLLIDESIELPVQINGKVRGKIQVAATADEPSIIATALADEKIAPLVAGKTIVKQIVVPNRLVNIVIK.

The 'HIGH' region motif lies at 42–52 (PYPSGNLHIGH). The 'KMSKS' region motif lies at 582 to 586 (KMSKS). Position 585 (K585) interacts with ATP.

It belongs to the class-I aminoacyl-tRNA synthetase family.

Its subcellular location is the cytoplasm. It carries out the reaction tRNA(Leu) + L-leucine + ATP = L-leucyl-tRNA(Leu) + AMP + diphosphate. The polypeptide is Leucine--tRNA ligase (Herpetosiphon aurantiacus (strain ATCC 23779 / DSM 785 / 114-95)).